The primary structure comprises 431 residues: Adenylosuccinate lyase (431 aa).

N(6)-(1,2-dicarboxyethyl)-AMP-binding positions include R4–Y5, N67–D69, and T93–S94. Catalysis depends on H141, which acts as the Proton donor/acceptor. Q212 contributes to the N(6)-(1,2-dicarboxyethyl)-AMP binding site. Catalysis depends on S262, which acts as the Proton donor/acceptor. Residues S263, K268–N270, and S307–Y311 contribute to the N(6)-(1,2-dicarboxyethyl)-AMP site.

The protein belongs to the lyase 1 family. Adenylosuccinate lyase subfamily. As to quaternary structure, homotetramer. Residues from neighboring subunits contribute catalytic and substrate-binding residues to each active site.

The enzyme catalyses N(6)-(1,2-dicarboxyethyl)-AMP = fumarate + AMP. It catalyses the reaction (2S)-2-[5-amino-1-(5-phospho-beta-D-ribosyl)imidazole-4-carboxamido]succinate = 5-amino-1-(5-phospho-beta-D-ribosyl)imidazole-4-carboxamide + fumarate. Its pathway is purine metabolism; AMP biosynthesis via de novo pathway; AMP from IMP: step 2/2. The protein operates within purine metabolism; IMP biosynthesis via de novo pathway; 5-amino-1-(5-phospho-D-ribosyl)imidazole-4-carboxamide from 5-amino-1-(5-phospho-D-ribosyl)imidazole-4-carboxylate: step 2/2. Its function is as follows. Catalyzes two reactions in de novo purine nucleotide biosynthesis. Catalyzes the breakdown of 5-aminoimidazole- (N-succinylocarboxamide) ribotide (SAICAR or 2-[5-amino-1-(5-phospho-beta-D-ribosyl)imidazole-4-carboxamido]succinate) to 5-aminoimidazole-4-carboxamide ribotide (AICAR or 5-amino-1-(5-phospho-beta-D-ribosyl)imidazole-4-carboxamide) and fumarate, and of adenylosuccinate (ADS or N(6)-(1,2-dicarboxyethyl)-AMP) to adenosine monophosphate (AMP) and fumarate. This Thermotoga maritima (strain ATCC 43589 / DSM 3109 / JCM 10099 / NBRC 100826 / MSB8) protein is Adenylosuccinate lyase (purB).